A 1058-amino-acid polypeptide reads, in one-letter code: MSSSPLSKKRRVSGPDPKPGSNCSPAQSVLSEVPSVPTNGMAKNGSEADIDEGLYSRQLYVLGHEAMKRLQTSSVLVSGLRGLGVEIAKNIILGGVKAVTLHDQGTAQWADLSSQFYLREEDIGKNRAEVSQPRLAELNSYVPVTAYTGPLVEDFLSGFQVVVLTNTPLEDQLRVGEFCHNRGIKLVVADTRGLFGQLFCDFGEEMILTDSNGEQPLSAMVSMVTKDNPGVVTCLDEARHGFESGDFVSFSEVQGMVELNGNQPMEIKVLGPYTFSICDTSNFSDYIRGGIVSQVKVPKKISFKSLVASLAEPDFVVTDFAKFSRPAQLHIGFQALHQFCAQHGRPPRPRNEEDAAELVALAQAVNARALPAVQQNNLDEDLIRKLAYVAAGDLAPINAFIGGLAAQEVMKACSGKFMPIMQWLYFDALECLPEDKEVLTEDKCLQRQNRYDGQVAVFGSDLQEKLGKQKYFLVGAGAIGCELLKNFAMIGLGCGEGGEIIVTDMDTIEKSNLNRQFLFRPWDVTKLKSDTAAAAVRQMNPHIRVTSHQNRVGPDTERIYDDDFFQNLDGVANALDNVDARMYMDRRCVYYRKPLLESGTLGTKGNVQVVIPFLTESYSSSQDPPEKSIPICTLKNFPNAIEHTLQWARDEFEGLFKQPAENVNQYLTDPKFVERTLRLAGTQPLEVLEAVQRSLVLQRPQTWADCVTWACHHWHTQYSNNIRQLLHNFPPDQLTSSGAPFWSGPKRCPHPLTFDVNNPLHLDYVMAAANLFAQTYGLTGSQDRAAVATFLQSVQVPEFTPKSGVKIHVSDQELQSANASVDDSRLEELKATLPSPDKLPGFKMYPIDFEKDDDSNFHMDFIVAASNLRAENYDIPSADRHKSKLIAGKIIPAIATTTAAVVGLVCLELYKVVQGHRQLDSYKNGFLNLALPFFGFSEPLAAPRHQYYNQEWTLWDRFEVQGLQPNGEEMTLKQFLDYFKTEHKLEITMLSQGVSMLYSFFMPAAKLKERLDQPMTEIVSRVSKRKLGRHVRALVLELCCNDESGEDVEVPYVRYTIR.

Residues 1–47 (MSSSPLSKKRRVSGPDPKPGSNCSPAQSVLSEVPSVPTNGMAKNGSE) form a disordered region. N-acetylserine is present on Ser-2. At Ser-2 the chain carries N-acetylalanine. At Ser-4 the chain carries Phosphoserine. The Nuclear localization signal motif lies at 5-11 (PLSKKRR). Residues Ser-13, Ser-21, Ser-24, and Ser-46 each carry the phosphoserine modification. Positions 21–30 (SNCSPAQSVL) are enriched in polar residues. Residue Tyr-55 is modified to Phosphotyrosine. 2 tandem repeats follow at residues 63–199 (GHEA…GQLF) and 459–611 (GSDL…QVVI). Residues 63 to 611 (GHEAMKRLQT…GTKGNVQVVI (549 aa)) form a 2 approximate repeats region. ATP-binding positions include Ala-478, Asp-504, Arg-515, Lys-528, and 576–577 (DN). Lys-528 carries the N6-succinyllysine modification. Cys-632 serves as the catalytic Glycyl thioester intermediate. Position 671 is an N6-acetyllysine (Lys-671). At Thr-800 the chain carries Phosphothreonine. 4 positions are modified to phosphoserine: Ser-810, Ser-816, Ser-820, and Ser-835. Lys-980 bears the N6-acetyllysine mark.

This sequence belongs to the ubiquitin-activating E1 family. In terms of assembly, monomer. Interacts with GAN (via BTB domain). Post-translationally, ISGylated. Detected in erythrocytes (at protein level). Ubiquitous.

It localises to the cytoplasm. Its subcellular location is the mitochondrion. It is found in the nucleus. The catalysed reaction is ATP + ubiquitin + [E1 ubiquitin-activating enzyme]-L-cysteine = AMP + diphosphate + S-ubiquitinyl-[E1 ubiquitin-activating enzyme]-L-cysteine.. The protein operates within protein modification; protein ubiquitination. In terms of biological role, catalyzes the first step in ubiquitin conjugation to mark cellular proteins for degradation through the ubiquitin-proteasome system. Activates ubiquitin by first adenylating its C-terminal glycine residue with ATP, and thereafter linking this residue to the side chain of a cysteine residue in E1, yielding a ubiquitin-E1 thioester and free AMP. Essential for the formation of radiation-induced foci, timely DNA repair and for response to replication stress. Promotes the recruitment of TP53BP1 and BRCA1 at DNA damage sites. The protein is Ubiquitin-like modifier-activating enzyme 1 (UBA1) of Homo sapiens (Human).